Here is a 281-residue protein sequence, read N- to C-terminus: Elongation factor Ts (281 aa).

The involved in Mg(2+) ion dislocation from EF-Tu stretch occupies residues 80 to 83 (TDFV).

It belongs to the EF-Ts family.

It localises to the cytoplasm. In terms of biological role, associates with the EF-Tu.GDP complex and induces the exchange of GDP to GTP. It remains bound to the aminoacyl-tRNA.EF-Tu.GTP complex up to the GTP hydrolysis stage on the ribosome. The protein is Elongation factor Ts of Vibrio parahaemolyticus serotype O3:K6 (strain RIMD 2210633).